The chain runs to 384 residues: MAP kinase-activated protein kinase 3 (384 aa).

An N-acetylmethionine modification is found at M1. Residues 1–33 (MDGETAGEKGSLVPQPGALGAPALGGAPAPGVR) form a disordered region. Residues 14–31 (PQPGALGAPALGGAPAPG) show a composition bias toward low complexity. The 261-residue stretch at 46 to 306 (QLSKQVLGLG…IMQFMNHPWI (261 aa)) folds into the Protein kinase domain. Residues 52 to 60 (LGLGVNGKV) and K75 each bind ATP. D168 functions as the Proton acceptor in the catalytic mechanism. At T203 the chain carries Phosphothreonine; by MAPK14. S253 is modified (phosphoserine; by MAPK14). S309 bears the Phosphoserine; by autocatalysis mark. The autoinhibitory helix stretch occupies residues 309 to 345 (SMEVPQTPLHTARVLEEDKDHWDDVKEEMTSALATMR). Phosphothreonine; by MAPK14 is present on T315. The short motif at 337–346 (MTSALATMRV) is the Nuclear export signal (NES) element. Residues 347–371 (DYDQVKIKDLKTSNNRLLNKRRKKQ) form a p38 MAPK-binding site region. Short sequence motifs (bipartite nuclear localization signal) lie at residues 352 to 355 (KIKD) and 366 to 370 (KRRKK). The tract at residues 359–384 (SNNRLLNKRRKKQGGSSSASPGCNNQ) is disordered. Polar residues predominate over residues 372–384 (GGSSSASPGCNNQ).

It belongs to the protein kinase superfamily. CAMK Ser/Thr protein kinase family. In terms of assembly, heterodimer with p38-alpha/MAPK14. The heterodimer with p38-alpha/MAPK14 forms a stable complex: molecules are positioned 'face to face' so that the ATP-binding sites of both kinases are at the heterodimer interface. Interacts with TCF3 and with polycomb proteins, such as PCH2 and BMI1/PCGF4. In terms of processing, phosphorylated and activated by MAPK1/ERK2 and MAPK3/ERK1. Phosphorylated and activated by MAP kinase p38-alpha/MAPK14 at Thr-203, Ser-253 and Thr-315.

It is found in the nucleus. The protein resides in the cytoplasm. It catalyses the reaction L-seryl-[protein] + ATP = O-phospho-L-seryl-[protein] + ADP + H(+). The catalysed reaction is L-threonyl-[protein] + ATP = O-phospho-L-threonyl-[protein] + ADP + H(+). Its activity is regulated as follows. Activated following phosphorylation by p38-alpha/MAPK14 following various stresses. Inhibited by ligand 5B (2'-[2-(1,3-benzodioxol-5-yl)pyrimidin-4-yl]-5',6'-dihydrospiro[piperidine-4,7'-pyrrolo[3,2-c]pyridin]- 4'(1'h)-one) and ligand P4O (2-[2-(2-fluorophenyl)pyridin-4-yl]-1,5,6,7-tetrahydro- 4h-pyrrolo[3,2-c]pyridin-4-one), 2 ATP-competitive inhibitors. Stress-activated serine/threonine-protein kinase involved in cytokines production, endocytosis, cell migration, chromatin remodeling and transcriptional regulation. Following stress, it is phosphorylated and activated by MAP kinase p38-alpha/MAPK14, leading to phosphorylation of substrates. Phosphorylates serine in the peptide sequence, Hyd-X-R-X(2)-S, where Hyd is a large hydrophobic residue. MAPKAPK2 and MAPKAPK3, share the same function and substrate specificity, but MAPKAPK3 kinase activity and level in protein expression are lower compared to MAPKAPK2. Phosphorylates HSP27/HSPB1, KRT18, KRT20, RCSD1, RPS6KA3, TAB3 and TTP/ZFP36. Mediates phosphorylation of HSP27/HSPB1 in response to stress, leading to dissociate HSP27/HSPB1 from large small heat-shock protein (sHsps) oligomers and impair their chaperone activities and ability to protect against oxidative stress effectively. Involved in inflammatory response by regulating tumor necrosis factor (TNF) and IL6 production post-transcriptionally: acts by phosphorylating AU-rich elements (AREs)-binding proteins, such as TTP/ZFP36, leading to regulate the stability and translation of TNF and IL6 mRNAs. Phosphorylation of TTP/ZFP36, a major post-transcriptional regulator of TNF, promotes its binding to 14-3-3 proteins and reduces its ARE mRNA affinity leading to inhibition of dependent degradation of ARE-containing transcript. Involved in toll-like receptor signaling pathway (TLR) in dendritic cells: required for acute TLR-induced macropinocytosis by phosphorylating and activating RPS6KA3. Also acts as a modulator of Polycomb-mediated repression. This Rattus norvegicus (Rat) protein is MAP kinase-activated protein kinase 3 (Mapkapk3).